A 106-amino-acid chain; its full sequence is Ferredoxin-2 (106 aa).

2 consecutive 4Fe-4S ferredoxin-type domains span residues 2–29 (YVVT…YEGE) and 30–59 (NFLV…GKWL). [3Fe-4S] cluster-binding residues include Cys8 and Cys16. [4Fe-4S] cluster-binding residues include Cys20, Cys39, Cys42, and Cys45. Cys49 contributes to the [3Fe-4S] cluster binding site. Positions 80 to 106 (ADADDWKDKPDKTGLLSENPGKGTVCH) are disordered.

The cofactor is [4Fe-4S] cluster. Requires [3Fe-4S] cluster as cofactor.

Functionally, ferredoxins are iron-sulfur proteins that transfer electrons in a wide variety of metabolic reactions. This Rhodospirillum rubrum protein is Ferredoxin-2.